A 106-amino-acid polypeptide reads, in one-letter code: Ferredoxin (106 aa).

[3Fe-4S] cluster is bound by residues Cys9 and Cys17. The [4Fe-4S] cluster site is built by Cys21, Cys40, Cys43, and Cys46. The 30-residue stretch at Arg31 to Asp60 folds into the 4Fe-4S ferredoxin-type domain. Cys50 contacts [3Fe-4S] cluster. Residues Gly84 to Glu106 form a disordered region.

Requires [4Fe-4S] cluster as cofactor. [3Fe-4S] cluster is required as a cofactor.

Ferredoxins are iron-sulfur proteins that transfer electrons in a wide variety of metabolic reactions. This chain is Ferredoxin (fdxA), found in Saccharopolyspora erythraea (Streptomyces erythraeus).